We begin with the raw amino-acid sequence, 375 residues long: MGVITAHCYCFTTVGSHKPYLSPSSHNFRHSPSVSLSSSSSSSPSPLRRISCQASSAPAAESTLTAKVGNGLKDFIHIDDFDKETILKILDRAIEVKTLLKSGDRTFRPFEGKTMSMIFAKPSMRTRVSFETGFSLLGGHAIYLGPNDIQMGKREETRDVARVLSRYNDIIMARVFSHQDILDLAKYASVPVINGLTDYNHPVQIMADALTMIEHIGRFEGTKVVYVGDGNNIVHSWLLLAAVVPFHFVCACPKGFEPDAKTVEKARKAGISKIEISHDPKEAVRGADVVYSDVWASMGQKEEAAYRREAFKGFQVDQNLMDAAGSKAFFMHCLPAERGVEVTDEVVEAPYSIVFPQAENRMHAQNAIMLHVLGK.

Carbamoyl phosphate contacts are provided by residues 123–126, Arg-174, His-201, and Gln-204; that span reads SMRT. Positions 232, 293, 297, and 298 each coordinate L-ornithine. Cys-333 serves as the catalytic Proton acceptor. Carbamoyl phosphate-binding positions include 333–334 and Arg-361; that span reads CL.

This sequence belongs to the aspartate/ornithine carbamoyltransferase superfamily. OTCase family. As to quaternary structure, homotrimer.

It is found in the plastid. It localises to the chloroplast. The enzyme catalyses carbamoyl phosphate + L-ornithine = L-citrulline + phosphate + H(+). The sequence is that of Ornithine carbamoyltransferase, chloroplastic (ARGF) from Pisum sativum (Garden pea).